A 431-amino-acid chain; its full sequence is Enolase (431 aa).

Glutamine 163 contacts (2R)-2-phosphoglycerate. Glutamate 205 acts as the Proton donor in catalysis. 3 residues coordinate Mg(2+): aspartate 242, glutamate 288, and aspartate 315. Residues lysine 340, arginine 369, serine 370, and lysine 391 each contribute to the (2R)-2-phosphoglycerate site. Lysine 340 serves as the catalytic Proton acceptor.

It belongs to the enolase family. It depends on Mg(2+) as a cofactor.

The protein localises to the cytoplasm. It is found in the secreted. The protein resides in the cell surface. It carries out the reaction (2R)-2-phosphoglycerate = phosphoenolpyruvate + H2O. Its pathway is carbohydrate degradation; glycolysis; pyruvate from D-glyceraldehyde 3-phosphate: step 4/5. Functionally, catalyzes the reversible conversion of 2-phosphoglycerate (2-PG) into phosphoenolpyruvate (PEP). It is essential for the degradation of carbohydrates via glycolysis. This is Enolase from Latilactobacillus sakei subsp. sakei (strain 23K) (Lactobacillus sakei subsp. sakei).